A 308-amino-acid polypeptide reads, in one-letter code: 11-beta-hydroxysteroid dehydrogenase-like 2 (308 aa).

The chain crosses the membrane as a helical; Signal-anchor for type II membrane protein span at residues 10–30 (FLLPPLTISFLVLFYPFYLFT). NADP(+) is bound by residues 53–79 (GASS…VARR) and aspartate 104. Serine 183 contacts substrate. Tyrosine 196 (proton acceptor) is an active-site residue. NADP(+) contacts are provided by residues 196 to 200 (YSASK) and lysine 200.

The protein belongs to the short-chain dehydrogenases/reductases (SDR) family.

Its subcellular location is the membrane. In Arabidopsis thaliana (Mouse-ear cress), this protein is 11-beta-hydroxysteroid dehydrogenase-like 2 (HSD2).